Here is a 189-residue protein sequence, read N- to C-terminus: Isopentenyl-diphosphate Delta-isomerase (189 aa).

The Mn(2+) site is built by histidine 27 and histidine 34. One can recognise a Nudix hydrolase domain in the interval 32–171; it reads PLHFAFSTYI…PFVFSPWMVD (140 aa). The active site involves cysteine 69. Histidine 71 lines the Mn(2+) pocket. Position 89 (glutamate 89) interacts with Mg(2+). The Mn(2+) site is built by glutamate 119 and glutamate 121. Glutamate 121 is a catalytic residue.

The protein belongs to the IPP isomerase type 1 family. Mg(2+) is required as a cofactor. It depends on Mn(2+) as a cofactor.

The protein localises to the cytoplasm. The enzyme catalyses isopentenyl diphosphate = dimethylallyl diphosphate. It functions in the pathway isoprenoid biosynthesis; dimethylallyl diphosphate biosynthesis; dimethylallyl diphosphate from isopentenyl diphosphate: step 1/1. In terms of biological role, catalyzes the 1,3-allylic rearrangement of the homoallylic substrate isopentenyl (IPP) to its highly electrophilic allylic isomer, dimethylallyl diphosphate (DMAPP). The sequence is that of Isopentenyl-diphosphate Delta-isomerase from Corynebacterium glutamicum (strain R).